We begin with the raw amino-acid sequence, 695 residues long: Segment polarity protein dishevelled homolog DVL-1 (695 aa).

Residues 1–85 (MAETKIIYHM…RVVSWLVLAE (85 aa)) form the DIX domain. A disordered region spans residues 89–236 (SDAGSQGTDS…RLRQTDRASS (148 aa)). Basic residues predominate over residues 142–151 (SHRRERARRR). A compositionally biased stretch (basic and acidic residues) spans 152-171 (NRDEAARTNGHPRGDRRREL). Positions 177 to 192 (SASTVLSSELESSSFI) are enriched in low complexity. Ser194 bears the Phosphoserine mark. Residues 201–214 (SRLSSSTEQSTSSR) are compositionally biased toward low complexity. Basic residues predominate over residues 215–228 (LIRKHKCRRRKQRL). In terms of domain architecture, PDZ spans 251–323 (TVTLNMERHH…NDDAVRVLRE (73 aa)). The DEP domain maps to 425-499 (PDSGLEIRDR…SEQCYYVFGD (75 aa)). The span at 551–580 (PAYQDPGFSYGSGSAGSQQSEGSKSSGSTR) shows a compositional bias: low complexity. The tract at residues 551 to 641 (PAYQDPGFSY…SQASAVAPGL (91 aa)) is disordered. Residues 622–635 (SQLSRGSSPRSQAS) show a composition bias toward polar residues.

The protein belongs to the DSH family. As to quaternary structure, interacts with BRD7 and INVS. Interacts (via PDZ domain) with the VANGL1 and VANGL2 (via C-terminus). Interacts (via PDZ domain) with NXN. Interacts with CXXC4. Interacts with ARRB1; the interaction is enhanced by phosphorylation of DVL1. Interacts with CYLD. Interacts (via PDZ domain) with RYK. Self-associates (via DIX domain) and forms higher homooligomers. Interacts (via PDZ domain) with DACT1 and FZD7, where DACT1 and FZD7 compete for the same binding site. Interacts (via DEP domain) with MUSK; the interaction is direct and mediates the formation a DVL1, MUSK and PAK1 ternary complex involved in AChR clustering. Interacts (via PDZ domain) with TMEM88. Interacts with DCDC2. Interacts with FOXK2. Interacts with PKD1 (via extracellular domain). Interacts (via PDZ domain) with CCDC88C/DAPLE; competes with CCDC88C for binding to frizzled receptor FZD7 and dissociates from CCDC88C following initiation of non-canonical Wnt signaling when CCDC88C displaces DVL1 from ligand-activated FZD7. Ubiquitinated; undergoes both 'Lys-48'-linked ubiquitination, leading to its subsequent degradation by the ubiquitin-proteasome pathway, and 'Lys-63'-linked ubiquitination. The interaction with INVS is required for ubiquitination. Deubiquitinated by CYLD, which acts on 'Lys-63'-linked ubiquitin chains.

It is found in the cell membrane. The protein localises to the cytoplasm. It localises to the cytosol. Its subcellular location is the cytoplasmic vesicle. In terms of biological role, participates in Wnt signaling by binding to the cytoplasmic C-terminus of frizzled family members and transducing the Wnt signal to down-stream effectors. Plays a role both in canonical and non-canonical Wnt signaling. Plays a role in the signal transduction pathways mediated by multiple Wnt genes. Required for LEF1 activation upon WNT1 and WNT3A signaling. DVL1 and PAK1 form a ternary complex with MUSK which is important for MUSK-dependent regulation of AChR clustering during the formation of the neuromuscular junction (NMJ). The sequence is that of Segment polarity protein dishevelled homolog DVL-1 (Dvl1) from Rattus norvegicus (Rat).